A 300-amino-acid polypeptide reads, in one-letter code: GTPase Era (300 aa).

The 172-residue stretch at His5–Ala176 folds into the Era-type G domain. Positions Gly13–Ser20 are G1. Gly13–Ser20 provides a ligand contact to GTP. Residues Gln39 to His43 form a G2 region. Residues Asp60–Gly63 are G3. GTP is bound by residues Asp60–Leu64 and Thr125–Asp128. Positions Thr125–Asp128 are G4. The G5 stretch occupies residues Val155–Ala157. In terms of domain architecture, KH type-2 spans Val207–Lys286.

It belongs to the TRAFAC class TrmE-Era-EngA-EngB-Septin-like GTPase superfamily. Era GTPase family. As to quaternary structure, monomer.

The protein localises to the cell envelope. It localises to the secreted. The protein resides in the cell wall. Exhibits GTPase activity. Binds RNA but is probably not involved in ribosome assembly in mycobacteria. This chain is GTPase Era, found in Mycobacterium bovis (strain ATCC BAA-935 / AF2122/97).